The primary structure comprises 462 residues: 3-oxoacyl-[acyl-carrier-protein] synthase I, chloroplastic (462 aa).

A chloroplast-targeting transit peptide spans 1-35; it reads MHAHAAHALGLRVPPPAFPRRRARPRRRPAAAVLA. The tract at residues 1–45 is disordered; that stretch reads MHAHAAHALGLRVPPPAFPRRRARPRRRPAAAVLATSAAPQRETD. Over residues 19–29 the composition is skewed to basic residues; the sequence is PRRRARPRRRP. Residues 30 to 39 show a composition bias toward low complexity; it reads AAAVLATSAA. The region spanning 47–459 is the Ketosynthase family 3 (KS3) domain; sequence RKRVVITGMG…GHNSVVVFAP (413 aa). Residues Cys213, His353, and His389 each act as for beta-ketoacyl synthase activity in the active site.

Belongs to the thiolase-like superfamily. Beta-ketoacyl-ACP synthases family. Homodimer.

It is found in the plastid. The protein localises to the chloroplast. It carries out the reaction a fatty acyl-[ACP] + malonyl-[ACP] + H(+) = a 3-oxoacyl-[ACP] + holo-[ACP] + CO2. Catalyzes the condensation reaction of fatty acid synthesis by the addition to an acyl acceptor of two carbons from malonyl-ACP. Specific for elongation from C-10 to unsaturated C-16 and C-18 fatty acids. In Hordeum vulgare (Barley), this protein is 3-oxoacyl-[acyl-carrier-protein] synthase I, chloroplastic (KAS12).